A 240-amino-acid chain; its full sequence is Biosynthetic peptidoglycan transglycosylase (240 aa).

Residues 9 to 31 form a helical membrane-spanning segment; that stretch reads FLNVVKWFAIASVLLVLLFRVVP.

Belongs to the glycosyltransferase 51 family.

The protein resides in the cell inner membrane. The catalysed reaction is [GlcNAc-(1-&gt;4)-Mur2Ac(oyl-L-Ala-gamma-D-Glu-L-Lys-D-Ala-D-Ala)](n)-di-trans,octa-cis-undecaprenyl diphosphate + beta-D-GlcNAc-(1-&gt;4)-Mur2Ac(oyl-L-Ala-gamma-D-Glu-L-Lys-D-Ala-D-Ala)-di-trans,octa-cis-undecaprenyl diphosphate = [GlcNAc-(1-&gt;4)-Mur2Ac(oyl-L-Ala-gamma-D-Glu-L-Lys-D-Ala-D-Ala)](n+1)-di-trans,octa-cis-undecaprenyl diphosphate + di-trans,octa-cis-undecaprenyl diphosphate + H(+). It functions in the pathway cell wall biogenesis; peptidoglycan biosynthesis. Functionally, peptidoglycan polymerase that catalyzes glycan chain elongation from lipid-linked precursors. This Pseudomonas fluorescens (strain SBW25) protein is Biosynthetic peptidoglycan transglycosylase.